A 441-amino-acid polypeptide reads, in one-letter code: Protein SPMIP7 (441 aa).

As to expression, testis specific. Expressed at the spermatid stage.

Its function is as follows. Essential for normal spermatogenesis. This is Protein SPMIP7 (Spmip7) from Mus musculus (Mouse).